We begin with the raw amino-acid sequence, 663 residues long: MSKDIQKKVEALREKIEYHNHRYYVLDAPEISDQEFDALMNELIELEQTYPEYQSPDSPSQRVGGEPLDKFPRVSHEIPMLSLENAESQKGLLDFHQRVSKNTQKTDPVYVAELKIDGLALSLRYEQGILVRGATRGDGTTGEDITPNVKTVRSIPLKLSKPLDIEIRGEAFMSKASFERLNQEKAERGEDPFANPRNAAAGSLRQLDPKIPAKRDLDFFPYSVPYIRGENLDSHYSAVKELKDLGFKINPYIRKFETMEEVISYCEEWQEKRTKLPYEIDGVVIKLNDYNLQQQLGATSKNPRWAIAYKFPAEQAESQVNNIFINVGRTGALTPVVELEPVRIAGSTVKRASLHNEDILRQKDVRIGDRVIIQKAGDIIPEVVKVKEEARTGHEQPFVYPESCPVCKSEAKRINDEAILRCINPGCPAQAKERIIHFSSRDAMDIEGLGEKVVEKLYSHGLIKDVADIYYLAKNELSNLEGFGDKSAENLLQAIEESKKNPFNKLLYGLGIRLVGKRAAQLLAFEFEHLDNLMKAQIEDLTKINDIGPRMATSIVSFFQLEHTHNLIRKLKKAGVNMKEPTEQNKSSDPSLTGKLVVITGTFDNYTRRELTDLIEAKGAKVTSNVSSNTDFVLVGANPGSKRDKAQDLGLTIIEESDLEDFL.

NAD(+)-binding positions include 33–37 (DQEFD), 82–83 (SL), and glutamate 113. Catalysis depends on lysine 115, which acts as the N6-AMP-lysine intermediate. Arginine 136, glutamate 170, lysine 286, and lysine 310 together coordinate NAD(+). Residues cysteine 404, cysteine 407, cysteine 422, and cysteine 427 each contribute to the Zn(2+) site. The 77-residue stretch at 587–663 (SSDPSLTGKL…IEESDLEDFL (77 aa)) folds into the BRCT domain.

The protein belongs to the NAD-dependent DNA ligase family. LigA subfamily. Mg(2+) is required as a cofactor. The cofactor is Mn(2+).

It catalyses the reaction NAD(+) + (deoxyribonucleotide)n-3'-hydroxyl + 5'-phospho-(deoxyribonucleotide)m = (deoxyribonucleotide)n+m + AMP + beta-nicotinamide D-nucleotide.. In terms of biological role, DNA ligase that catalyzes the formation of phosphodiester linkages between 5'-phosphoryl and 3'-hydroxyl groups in double-stranded DNA using NAD as a coenzyme and as the energy source for the reaction. It is essential for DNA replication and repair of damaged DNA. The protein is DNA ligase of Natranaerobius thermophilus (strain ATCC BAA-1301 / DSM 18059 / JW/NM-WN-LF).